The following is a 220-amino-acid chain: ATP-dependent Clp protease proteolytic subunit (220 aa).

The Nucleophile role is filled by serine 125. Histidine 150 is an active-site residue.

This sequence belongs to the peptidase S14 family. As to quaternary structure, fourteen ClpP subunits assemble into 2 heptameric rings which stack back to back to give a disk-like structure with a central cavity, resembling the structure of eukaryotic proteasomes.

The protein resides in the cytoplasm. It carries out the reaction Hydrolysis of proteins to small peptides in the presence of ATP and magnesium. alpha-casein is the usual test substrate. In the absence of ATP, only oligopeptides shorter than five residues are hydrolyzed (such as succinyl-Leu-Tyr-|-NHMec, and Leu-Tyr-Leu-|-Tyr-Trp, in which cleavage of the -Tyr-|-Leu- and -Tyr-|-Trp bonds also occurs).. In terms of biological role, cleaves peptides in various proteins in a process that requires ATP hydrolysis. Has a chymotrypsin-like activity. Plays a major role in the degradation of misfolded proteins. The chain is ATP-dependent Clp protease proteolytic subunit from Bacteroides fragilis (strain YCH46).